We begin with the raw amino-acid sequence, 207 residues long: MHAQGFLCSKHAMSEPIRLIVGLGNPGPDYETTRHNAGFWLADRLADDLRATFALEKGFMGMVAKARFEGENVLLLKPITYMNRSGQAVGALARFYKLAPEQVLVLHDELDLLPGQVKMKQGGGHAGHNGLKDIQAALGTPNFWRLRLGIGHPRTLNLAQQVADFVLHPPRRDEQAEIDTVIDRCRAVVPALLRGDFAQATRQLHTA.

Y30 is a tRNA binding site. The Proton acceptor role is filled by H35. 3 residues coordinate tRNA: Y81, N83, and N129.

The protein belongs to the PTH family. As to quaternary structure, monomer.

Its subcellular location is the cytoplasm. It carries out the reaction an N-acyl-L-alpha-aminoacyl-tRNA + H2O = an N-acyl-L-amino acid + a tRNA + H(+). Hydrolyzes ribosome-free peptidyl-tRNAs (with 1 or more amino acids incorporated), which drop off the ribosome during protein synthesis, or as a result of ribosome stalling. Its function is as follows. Catalyzes the release of premature peptidyl moieties from peptidyl-tRNA molecules trapped in stalled 50S ribosomal subunits, and thus maintains levels of free tRNAs and 50S ribosomes. The polypeptide is Peptidyl-tRNA hydrolase (Bordetella avium (strain 197N)).